A 251-amino-acid polypeptide reads, in one-letter code: Triosephosphate isomerase (251 aa).

9-11 is a binding site for substrate; sequence NWK. His-95 (electrophile) is an active-site residue. Glu-167 serves as the catalytic Proton acceptor. Substrate is bound by residues Gly-173, Ser-212, and 233 to 234; that span reads GG.

The protein belongs to the triosephosphate isomerase family. In terms of assembly, homodimer.

The protein localises to the cytoplasm. The enzyme catalyses D-glyceraldehyde 3-phosphate = dihydroxyacetone phosphate. It functions in the pathway carbohydrate biosynthesis; gluconeogenesis. Its pathway is carbohydrate degradation; glycolysis; D-glyceraldehyde 3-phosphate from glycerone phosphate: step 1/1. Functionally, involved in the gluconeogenesis. Catalyzes stereospecifically the conversion of dihydroxyacetone phosphate (DHAP) to D-glyceraldehyde-3-phosphate (G3P). The protein is Triosephosphate isomerase of Pseudomonas putida (strain ATCC 700007 / DSM 6899 / JCM 31910 / BCRC 17059 / LMG 24140 / F1).